Reading from the N-terminus, the 422-residue chain is uncharacterized protein (422 aa).

Disordered regions lie at residues 1–21 (MRDNIAKGITAGSNTQQTTYD), 158–218 (TAKS…TEQV), and 246–271 (DFGTAPSSSGSGTQDGTPTPWTPWLT). The span at 11–21 (AGSNTQQTTYD) shows a compositional bias: polar residues. The span at 170-199 (SKSSNGSSSTSTTQRGGSSNENKVKALQVA) shows a compositional bias: low complexity. 2 stretches are compositionally biased toward polar residues: residues 205–216 (GSQGNSGDQGTE) and 250–261 (APSSSGSGTQDG). A compositionally biased stretch (low complexity) spans 262–271 (TPTPWTPWLT).

This sequence belongs to the adhesin P1 family.

This is an uncharacterized protein from Mycoplasma pneumoniae (strain ATCC 29342 / M129 / Subtype 1) (Mycoplasmoides pneumoniae).